Consider the following 156-residue polypeptide: Deoxyuridine 5'-triphosphate nucleotidohydrolase (156 aa).

Substrate is bound by residues 76–78 (RSG), asparagine 89, 93–95 (TVD), and lysine 103.

Belongs to the dUTPase family. Mg(2+) is required as a cofactor.

The enzyme catalyses dUTP + H2O = dUMP + diphosphate + H(+). The protein operates within pyrimidine metabolism; dUMP biosynthesis; dUMP from dCTP (dUTP route): step 2/2. Functionally, this enzyme is involved in nucleotide metabolism: it produces dUMP, the immediate precursor of thymidine nucleotides and it decreases the intracellular concentration of dUTP so that uracil cannot be incorporated into DNA. The protein is Deoxyuridine 5'-triphosphate nucleotidohydrolase of Rhizobium etli (strain CIAT 652).